We begin with the raw amino-acid sequence, 145 residues long: 3-hydroxyacyl-[acyl-carrier-protein] dehydratase FabZ (145 aa).

His50 is a catalytic residue.

The protein belongs to the thioester dehydratase family. FabZ subfamily.

The protein resides in the cytoplasm. The enzyme catalyses a (3R)-hydroxyacyl-[ACP] = a (2E)-enoyl-[ACP] + H2O. Its function is as follows. Involved in unsaturated fatty acids biosynthesis. Catalyzes the dehydration of short chain beta-hydroxyacyl-ACPs and long chain saturated and unsaturated beta-hydroxyacyl-ACPs. The protein is 3-hydroxyacyl-[acyl-carrier-protein] dehydratase FabZ of Coxiella burnetii (strain CbuK_Q154) (Coxiella burnetii (strain Q154)).